The chain runs to 204 residues: Peptide deformylase (204 aa).

Fe cation-binding residues include C131 and H174. E175 is an active-site residue. H178 lines the Fe cation pocket.

The protein belongs to the polypeptide deformylase family. The cofactor is Fe(2+).

It carries out the reaction N-terminal N-formyl-L-methionyl-[peptide] + H2O = N-terminal L-methionyl-[peptide] + formate. Its function is as follows. Removes the formyl group from the N-terminal Met of newly synthesized proteins. Requires at least a dipeptide for an efficient rate of reaction. N-terminal L-methionine is a prerequisite for activity but the enzyme has broad specificity at other positions. This is Peptide deformylase from Streptococcus pyogenes serotype M18 (strain MGAS8232).